The chain runs to 265 residues: Methylthioribulose-1-phosphate dehydratase (265 aa).

C116 lines the substrate pocket. The Zn(2+) site is built by H134 and H136. E159 serves as the catalytic Proton donor/acceptor. H224 contacts Zn(2+).

This sequence belongs to the aldolase class II family. MtnB subfamily. The cofactor is Zn(2+).

It localises to the cytoplasm. The catalysed reaction is 5-(methylsulfanyl)-D-ribulose 1-phosphate = 5-methylsulfanyl-2,3-dioxopentyl phosphate + H2O. It participates in amino-acid biosynthesis; L-methionine biosynthesis via salvage pathway; L-methionine from S-methyl-5-thio-alpha-D-ribose 1-phosphate: step 2/6. In terms of biological role, catalyzes the dehydration of methylthioribulose-1-phosphate (MTRu-1-P) into 2,3-diketo-5-methylthiopentyl-1-phosphate (DK-MTP-1-P). In Debaryomyces hansenii (strain ATCC 36239 / CBS 767 / BCRC 21394 / JCM 1990 / NBRC 0083 / IGC 2968) (Yeast), this protein is Methylthioribulose-1-phosphate dehydratase.